The chain runs to 195 residues: Pyruvoyl-dependent arginine decarboxylase AaxB (195 aa).

Serine 53 is modified (pyruvic acid (Ser)).

It belongs to the pyruvoyl-dependent arginine decarboxylase family. In terms of assembly, trimer of an alpha-beta dimer. It depends on pyruvate as a cofactor.

It localises to the cytoplasm. It carries out the reaction L-arginine + H(+) = agmatine + CO2. Part of the AaxABC system, catalyzes the decarboxylation of L-arginine. The arginine uptake by the bacterium in the macrophage may be a virulence factor against the host innate immune response. The protein is Pyruvoyl-dependent arginine decarboxylase AaxB (aaxB) of Chlamydia trachomatis serovar L2 (strain ATCC VR-902B / DSM 19102 / 434/Bu).